Reading from the N-terminus, the 154-residue chain is Ribonuclease H (154 aa).

The 141-residue stretch at 1-141 (MKRIEAYTDG…ADELARAGME (141 aa)) folds into the RNase H type-1 domain. Mg(2+)-binding residues include Asp-9, Glu-47, Asp-69, and Asp-133.

The protein belongs to the RNase H family. In terms of assembly, monomer. Mg(2+) serves as cofactor.

The protein localises to the cytoplasm. The catalysed reaction is Endonucleolytic cleavage to 5'-phosphomonoester.. Its function is as follows. Endonuclease that specifically degrades the RNA of RNA-DNA hybrids. This Brucella abortus (strain 2308) protein is Ribonuclease H.